We begin with the raw amino-acid sequence, 407 residues long: Argininosuccinate synthase (407 aa).

Residues 16 to 24 (AYSGGLDTS) and Ala44 each bind ATP. Positions 96 and 101 each coordinate L-citrulline. Gly126 serves as a coordination point for ATP. Positions 128, 132, and 133 each coordinate L-aspartate. Asn132 provides a ligand contact to L-citrulline. L-citrulline-binding residues include Arg136, Ser185, Ser194, Glu270, and Tyr282.

The protein belongs to the argininosuccinate synthase family. Type 1 subfamily. Homotetramer.

It is found in the cytoplasm. It carries out the reaction L-citrulline + L-aspartate + ATP = 2-(N(omega)-L-arginino)succinate + AMP + diphosphate + H(+). It functions in the pathway amino-acid biosynthesis; L-arginine biosynthesis; L-arginine from L-ornithine and carbamoyl phosphate: step 2/3. The chain is Argininosuccinate synthase from Shewanella putrefaciens (strain CN-32 / ATCC BAA-453).